A 536-amino-acid polypeptide reads, in one-letter code: MSYSIGIDFGTASGRVILADTSNGHIISRYEEDYANGTYMNSLYDKPLPENYFLQNADDYLQILEQGVQFVLEDSKVNKNDVVGIGVDFTSSTIIFLDEQFEPLHRHEDLKTNPHAYVKLWKHHGAQDEANYMIQMSKNKNWLDYYGSSVNSEWMIPKILEVKHEAPEILRRARYIMEAGDYITSILTNSNIRSNCGIGFKGFWDNEAGFNYDFFHSVDPDLPKIVKEKCEAPIISIGESAGRLCKDYQQIWGLSQDVQVSPFIIDAHSGVLGVGAIEAGEFTAVIGTSTCHLMLDSRQVPISSITGSVKNAIIPGLYAYEAGQPAVGDLFEYSKNQAPKHIVDQANEHHMPVLNYLEELASHIRIEEQHVVVLDWLNGNRSILSNSHLTGSIFGLTLQTPYEMIHRAYIEATAFGTKLIMKQFEDNHIPVHTVYASGGIPQKSKLLVEIYANVLNKRVVVIDSSNASALGAAMLGANVGNAYSTLKEAALSMKQPIAYIQEPEIQKVQAYKPLYHKYCELHDLLGRQYPELSYLI.

The protein belongs to the ribulokinase family.

It carries out the reaction D-ribulose + ATP = D-ribulose 5-phosphate + ADP + H(+). It catalyses the reaction L-ribulose + ATP = L-ribulose 5-phosphate + ADP + H(+). It functions in the pathway carbohydrate degradation; L-arabinose degradation via L-ribulose; D-xylulose 5-phosphate from L-arabinose (bacterial route): step 2/3. This is Ribulokinase from Staphylococcus epidermidis (strain ATCC 12228 / FDA PCI 1200).